The primary structure comprises 245 residues: 1-(5-phosphoribosyl)-5-[(5-phosphoribosylamino)methylideneamino] imidazole-4-carboxamide isomerase (245 aa).

Asp-7 acts as the Proton acceptor in catalysis. The Proton donor role is filled by Asp-129.

Belongs to the HisA/HisF family.

The protein resides in the cytoplasm. The enzyme catalyses 1-(5-phospho-beta-D-ribosyl)-5-[(5-phospho-beta-D-ribosylamino)methylideneamino]imidazole-4-carboxamide = 5-[(5-phospho-1-deoxy-D-ribulos-1-ylimino)methylamino]-1-(5-phospho-beta-D-ribosyl)imidazole-4-carboxamide. The protein operates within amino-acid biosynthesis; L-histidine biosynthesis; L-histidine from 5-phospho-alpha-D-ribose 1-diphosphate: step 4/9. The polypeptide is 1-(5-phosphoribosyl)-5-[(5-phosphoribosylamino)methylideneamino] imidazole-4-carboxamide isomerase (Escherichia fergusonii (strain ATCC 35469 / DSM 13698 / CCUG 18766 / IAM 14443 / JCM 21226 / LMG 7866 / NBRC 102419 / NCTC 12128 / CDC 0568-73)).